The chain runs to 176 residues: NADH-quinone oxidoreductase subunit I 1 (176 aa).

4Fe-4S ferredoxin-type domains are found at residues 45–77 (IVLT…MEAT) and 87–116 (RWFR…MTPD). Positions 57, 60, 63, 67, 96, 99, 102, and 106 each coordinate [4Fe-4S] cluster.

The protein belongs to the complex I 23 kDa subunit family. NDH-1 is composed of 14 different subunits. Subunits NuoA, H, J, K, L, M, N constitute the membrane sector of the complex. The cofactor is [4Fe-4S] cluster.

It localises to the cell inner membrane. It carries out the reaction a quinone + NADH + 5 H(+)(in) = a quinol + NAD(+) + 4 H(+)(out). NDH-1 shuttles electrons from NADH, via FMN and iron-sulfur (Fe-S) centers, to quinones in the respiratory chain. The immediate electron acceptor for the enzyme in this species is believed to be ubiquinone. Couples the redox reaction to proton translocation (for every two electrons transferred, four hydrogen ions are translocated across the cytoplasmic membrane), and thus conserves the redox energy in a proton gradient. This is NADH-quinone oxidoreductase subunit I 1 from Geobacter metallireducens (strain ATCC 53774 / DSM 7210 / GS-15).